We begin with the raw amino-acid sequence, 95 residues long: Small ribosomal subunit protein bS20 (95 aa).

2 disordered regions span residues 1–26 (MALR…RSRK) and 76–95 (KSRL…AQPA). A compositionally biased stretch (low complexity) spans 80 to 95 (AKALNKAKAAQAAQPA).

This sequence belongs to the bacterial ribosomal protein bS20 family.

In terms of biological role, binds directly to 16S ribosomal RNA. In Deinococcus geothermalis (strain DSM 11300 / CIP 105573 / AG-3a), this protein is Small ribosomal subunit protein bS20.